Consider the following 110-residue polypeptide: Early E3B 12.7 kDa protein (110 aa).

A signal peptide spans 1–16 (MKTALVLFFMLIPVWA). A helical membrane pass occupies residues 37-57 (YIGWVYGIMSGLVFVSSVVSL).

It belongs to the adenoviridae E3_14 family. Phosphorylated on serine; O-glycosylated, but not N-glycosylated.

Its subcellular location is the host membrane. Functionally, down-regulates the EGF receptor and prevents cytolysis by TNF. This Homo sapiens (Human) protein is Early E3B 12.7 kDa protein.